A 473-amino-acid chain; its full sequence is Photosystem II CP43 reaction center protein (473 aa).

Residues 1–14 (MKTLYSLRRFYPVE) constitute a propeptide that is removed on maturation. The residue at position 15 (T15) is an N-acetylthreonine. T15 carries the post-translational modification Phosphothreonine. 5 consecutive transmembrane segments (helical) span residues 69 to 93 (LFEV…PHLA), 134 to 155 (LLGP…KDRN), 178 to 200 (KALY…RKIT), 255 to 275 (KPFA…LSYS), and 291 to 312 (WFNN…ASQA). E367 contacts [CaMn4O5] cluster. Residues 447–471 (RARAAAAGFEKGIDRDFEPVLSMTP) traverse the membrane as a helical segment.

The protein belongs to the PsbB/PsbC family. PsbC subfamily. As to quaternary structure, PSII is composed of 1 copy each of membrane proteins PsbA, PsbB, PsbC, PsbD, PsbE, PsbF, PsbH, PsbI, PsbJ, PsbK, PsbL, PsbM, PsbT, PsbX, PsbY, PsbZ, Psb30/Ycf12, at least 3 peripheral proteins of the oxygen-evolving complex and a large number of cofactors. It forms dimeric complexes. It depends on Binds multiple chlorophylls and provides some of the ligands for the Ca-4Mn-5O cluster of the oxygen-evolving complex. It may also provide a ligand for a Cl- that is required for oxygen evolution. PSII binds additional chlorophylls, carotenoids and specific lipids. as a cofactor.

The protein localises to the plastid. Its subcellular location is the chloroplast thylakoid membrane. One of the components of the core complex of photosystem II (PSII). It binds chlorophyll and helps catalyze the primary light-induced photochemical processes of PSII. PSII is a light-driven water:plastoquinone oxidoreductase, using light energy to abstract electrons from H(2)O, generating O(2) and a proton gradient subsequently used for ATP formation. In Populus trichocarpa (Western balsam poplar), this protein is Photosystem II CP43 reaction center protein.